The chain runs to 754 residues: Protein NUCLEOLAR FACTOR 1 (754 aa).

Disordered regions lie at residues Met1–Val56, Ser69–Thr166, and Glu390–Ser413. Acidic residues predominate over residues Ser42 to Ser52. A compositionally biased stretch (basic and acidic residues) spans Met80–Asp93. Acidic residues-rich tracts occupy residues Thr94–Gly110 and Asp138–Val161. Polar residues predominate over residues Ser402–Ser413.

This sequence belongs to the UTP25 family. Component of the ribosomal small subunit (SSU) processome composed of at least 40 protein subunits and snoRNA U3. Interacts with THAL in the nucleus. Preferentially expressed in differentiating cells in young tissues such as floral buds, ovules, embryos, secondary roots, pollen, young seedlings and vascular bundles. Observed ubiquitously.

It localises to the nucleus. The protein localises to the nucleolus. In terms of biological role, DEAD-box RNA helicase-like protein required for pre-18S rRNA processing, specifically at sites A0, A1, and A2. Involved in the control of rRNA expression. Required for embryo development and female gametogenesis. The sequence is that of Protein NUCLEOLAR FACTOR 1 from Arabidopsis thaliana (Mouse-ear cress).